The sequence spans 494 residues: Nuclear distribution protein PAC1 (494 aa).

One can recognise a LisH domain in the interval 14–46 (QKNELDKSVLRYLNWNYKQTVRHEHAQDYESVR). A coiled-coil region spans residues 90–123 (NSIVRLQKKIIELEQNTETLVSQIKDLNTQVSEL). WD repeat units lie at residues 153–192 (NVESSVTSVKLHPNLPIVFVATDHGKLYAFDLFNYTIPLA), 196–244 (SHTK…CKFQ), 251–292 (GHEH…SLKT), 295–334 (PHSQWVRSIDVLGDYIISGSHDTTLRLTHWPSGNGLSVGT), 347–395 (HFIE…LMAH), 415–454 (GHLSWVRDISIRGQYLFSCADDKSVRCWDLNTGQCLHVWE), and 457–492 (HTGFVNSLDLDVDFDSNVTPRQMMVTGGLDCKSNVF).

The protein belongs to the WD repeat LIS1/nudF family. As to quaternary structure, self-associates. Interacts with NDL1 and dynein.

The protein resides in the cytoplasm. Its subcellular location is the cytoskeleton. It localises to the spindle pole. Positively regulates the activity of the minus-end directed microtubule motor protein dynein. Plays a central role in positioning the mitotic spindle at the bud neck during cell division. Targets cytoplasmic dynein to microtubule plus ends, thereby promoting dynein-mediated microtubule sliding along the bud cortex and consequently the movement of the mitotic spindle to the bud neck. The polypeptide is Nuclear distribution protein PAC1 (Saccharomyces cerevisiae (strain JAY291) (Baker's yeast)).